We begin with the raw amino-acid sequence, 440 residues long: tRNA-2-methylthio-N(6)-dimethylallyladenosine synthase (440 aa).

The 117-residue stretch at 4-120 folds into the MTTase N-terminal domain; that stretch reads NYVYIETFGC…LNDMVLAAER (117 aa). Cysteine 13, cysteine 49, cysteine 83, cysteine 158, cysteine 162, and cysteine 165 together coordinate [4Fe-4S] cluster. The Radical SAM core domain occupies 144–374; the sequence is GTARISSFVT…QALQKRTTME (231 aa). In terms of domain architecture, TRAM spans 377–439; the sequence is DVLLGTRQTV…QNSLLGELLP (63 aa).

The protein belongs to the methylthiotransferase family. MiaB subfamily. Monomer. The cofactor is [4Fe-4S] cluster.

The protein localises to the cytoplasm. The catalysed reaction is N(6)-dimethylallyladenosine(37) in tRNA + (sulfur carrier)-SH + AH2 + 2 S-adenosyl-L-methionine = 2-methylsulfanyl-N(6)-dimethylallyladenosine(37) in tRNA + (sulfur carrier)-H + 5'-deoxyadenosine + L-methionine + A + S-adenosyl-L-homocysteine + 2 H(+). Functionally, catalyzes the methylthiolation of N6-(dimethylallyl)adenosine (i(6)A), leading to the formation of 2-methylthio-N6-(dimethylallyl)adenosine (ms(2)i(6)A) at position 37 in tRNAs that read codons beginning with uridine. The polypeptide is tRNA-2-methylthio-N(6)-dimethylallyladenosine synthase (Pelobacter propionicus (strain DSM 2379 / NBRC 103807 / OttBd1)).